Consider the following 108-residue polypeptide: Nucleoid-associated protein Csal_1459 (108 aa).

Basic and acidic residues predominate over residues 84–93 (EETSRGRMEE). The interval 84–108 (EETSRGRMEEATEGMNLPPGFKMPF) is disordered.

Belongs to the YbaB/EbfC family. Homodimer.

The protein resides in the cytoplasm. It localises to the nucleoid. Functionally, binds to DNA and alters its conformation. May be involved in regulation of gene expression, nucleoid organization and DNA protection. This Chromohalobacter salexigens (strain ATCC BAA-138 / DSM 3043 / CIP 106854 / NCIMB 13768 / 1H11) protein is Nucleoid-associated protein Csal_1459.